A 418-amino-acid polypeptide reads, in one-letter code: MKETITKQLIAVQQASREIITLTDETINSLLCALADSIPSHQEAILQANQKDIERMDPADPMVDRLLLNASRLDAIAADIRNVASLPSPLDALLEERVLPNGLNLKKVTVPIGVIGIIYEARPNVTFDVFALCLKSGNATVLKGGSDAMYSNIAIVELIHSVLKQHGINPDTLYLLPAEREAAAVMLNAVGYIDMIIPRGSQKLIDFVRNNAKVPVIETGAGIVHTYFDKSGDLDLGKHIIFNAKTRRPSVCNALDTLVIHQERLADLPALVEPLQEKQVMLFADEAAFQALQGSYPDDLLHQAEPEHFGTEFLSLKMSVKTVSSLEEALEHITRYSSRHSEAIIATDPETTATFLKRVDAAVVYANTSTAFTDGAQFGLGAEIGISTQKLHARGPMALKELTTYKWIIEGNGQTRPA.

This sequence belongs to the gamma-glutamyl phosphate reductase family.

Its subcellular location is the cytoplasm. The enzyme catalyses L-glutamate 5-semialdehyde + phosphate + NADP(+) = L-glutamyl 5-phosphate + NADPH + H(+). It participates in amino-acid biosynthesis; L-proline biosynthesis; L-glutamate 5-semialdehyde from L-glutamate: step 2/2. In terms of biological role, catalyzes the NADPH-dependent reduction of L-glutamate 5-phosphate into L-glutamate 5-semialdehyde and phosphate. The product spontaneously undergoes cyclization to form 1-pyrroline-5-carboxylate. This Pelodictyon phaeoclathratiforme (strain DSM 5477 / BU-1) protein is Gamma-glutamyl phosphate reductase.